A 113-amino-acid polypeptide reads, in one-letter code: MQAKAVARTVRIAPRKARLVIDLIRGKQVSEAVAILRHTPKAASPIIEKVLKSAVANAEHNYDMDVNKLVVTEAYVNEGPTLKRFRPRAQGRASAINKRTSHITIVVSEKKEG.

The protein belongs to the universal ribosomal protein uL22 family. In terms of assembly, part of the 50S ribosomal subunit.

In terms of biological role, this protein binds specifically to 23S rRNA; its binding is stimulated by other ribosomal proteins, e.g. L4, L17, and L20. It is important during the early stages of 50S assembly. It makes multiple contacts with different domains of the 23S rRNA in the assembled 50S subunit and ribosome. The globular domain of the protein is located near the polypeptide exit tunnel on the outside of the subunit, while an extended beta-hairpin is found that lines the wall of the exit tunnel in the center of the 70S ribosome. This is Large ribosomal subunit protein uL22 from Anoxybacillus flavithermus (strain DSM 21510 / WK1).